A 393-amino-acid polypeptide reads, in one-letter code: tRNA(Met) cytidine acetate ligase (393 aa).

ATP-binding residues include G81, N142, and R167.

It belongs to the TmcAL family.

The protein resides in the cytoplasm. It catalyses the reaction cytidine(34) in elongator tRNA(Met) + acetate + ATP = N(4)-acetylcytidine(34) in elongator tRNA(Met) + AMP + diphosphate. Functionally, catalyzes the formation of N(4)-acetylcytidine (ac(4)C) at the wobble position of elongator tRNA(Met), using acetate and ATP as substrates. First activates an acetate ion to form acetyladenylate (Ac-AMP) and then transfers the acetyl group to tRNA to form ac(4)C34. In Bacillus cereus (strain ATCC 10987 / NRS 248), this protein is tRNA(Met) cytidine acetate ligase.